The sequence spans 201 residues: CDP-diacylglycerol--serine O-phosphatidyltransferase (201 aa).

The next 6 membrane-spanning stretches (helical) occupy residues 19–39, 57–77, 88–108, 112–132, 133–153, and 162–182; these read IITG…LSII, FGAE…PAYL, LISA…FGIL, GFIG…CQLI, NSYL…ISDI, and IFIY…PHFA.

It belongs to the CDP-alcohol phosphatidyltransferase class-I family.

The protein localises to the cell membrane. It catalyses the reaction a CDP-1,2-diacyl-sn-glycerol + L-serine = a 1,2-diacyl-sn-glycero-3-phospho-L-serine + CMP + H(+). In Methanocaldococcus jannaschii (strain ATCC 43067 / DSM 2661 / JAL-1 / JCM 10045 / NBRC 100440) (Methanococcus jannaschii), this protein is CDP-diacylglycerol--serine O-phosphatidyltransferase (pssA).